Here is a 360-residue protein sequence, read N- to C-terminus: Dihydroorotate dehydrogenase (quinone) (360 aa).

Residues Ala65–Lys69 and Thr89 each bind FMN. Lys69 lines the substrate pocket. Asn114 to Phe118 contacts substrate. Residues Asn147 and Asn180 each contribute to the FMN site. Substrate is bound at residue Asn180. The active-site Nucleophile is the Ser183. A substrate-binding site is contributed by Asn185. 2 residues coordinate FMN: Lys225 and Thr253. Asn254–Thr255 provides a ligand contact to substrate. FMN-binding positions include Gly276, Gly305, and Tyr326 to Thr327.

Belongs to the dihydroorotate dehydrogenase family. Type 2 subfamily. Monomer. The cofactor is FMN.

It is found in the cell membrane. The catalysed reaction is (S)-dihydroorotate + a quinone = orotate + a quinol. Its pathway is pyrimidine metabolism; UMP biosynthesis via de novo pathway; orotate from (S)-dihydroorotate (quinone route): step 1/1. Catalyzes the conversion of dihydroorotate to orotate with quinone as electron acceptor. The sequence is that of Dihydroorotate dehydrogenase (quinone) from Verminephrobacter eiseniae (strain EF01-2).